The primary structure comprises 288 residues: dTDP-4-keto-6-deoxy-D-glucose reductase (288 aa).

Residues glycine 12–leucine 14, aspartate 38–isoleucine 39, alanine 62–threonine 64, tyrosine 127, and lysine 131 contribute to the NADH site. Residues methionine 13–leucine 14, aspartate 38–isoleucine 39, alanine 62–threonine 64, tyrosine 127, and lysine 131 each bind NADPH. Tyrosine 127 acts as the Proton donor/acceptor in catalysis.

This sequence belongs to the dTDP-4-dehydrorhamnose reductase family. Mg(2+) is required as a cofactor.

It participates in antibiotic biosynthesis; novobiocin biosynthesis. Reduces the product formed from the reaction of NovW with dTDP-4-keto-6-deoxy-D-glucose to result in dTDP-5-methyl-L-rhamnose in the novobiocin biosynthesis pathway, an aminocoumarin family antibiotic that targets bacterial DNA gyrases. This Streptomyces niveus (Streptomyces spheroides) protein is dTDP-4-keto-6-deoxy-D-glucose reductase (novS).